Reading from the N-terminus, the 122-residue chain is Large ribosomal subunit protein uL14 (122 aa).

The protein belongs to the universal ribosomal protein uL14 family. As to quaternary structure, part of the 50S ribosomal subunit. Forms a cluster with proteins L3 and L19. In the 70S ribosome, L14 and L19 interact and together make contacts with the 16S rRNA in bridges B5 and B8.

Its function is as follows. Binds to 23S rRNA. Forms part of two intersubunit bridges in the 70S ribosome. The protein is Large ribosomal subunit protein uL14 of Rickettsia canadensis (strain McKiel).